Consider the following 121-residue polypeptide: Ribonuclease P protein component 4 (121 aa).

4 residues coordinate Zn(2+): C63, C66, C89, and C92.

It belongs to the eukaryotic/archaeal RNase P protein component 4 family. In terms of assembly, consists of a catalytic RNA component and at least 4-5 protein subunits. Requires Zn(2+) as cofactor.

Its subcellular location is the cytoplasm. The catalysed reaction is Endonucleolytic cleavage of RNA, removing 5'-extranucleotides from tRNA precursor.. Its function is as follows. Part of ribonuclease P, a protein complex that generates mature tRNA molecules by cleaving their 5'-ends. The chain is Ribonuclease P protein component 4 from Methanobrevibacter smithii (strain ATCC 35061 / DSM 861 / OCM 144 / PS).